The sequence spans 660 residues: Cysteine-rich receptor-like protein kinase 22 (660 aa).

The first 24 residues, 1–24, serve as a signal peptide directing secretion; it reads MKQRSFLSILCFILLAFGVASVSA. 2 consecutive Gnk2-homologous domains span residues 25–128 and 137–250; these read QTCI…NISF and IEPQ…LFTF. The Extracellular segment spans residues 25–294; it reads QTCIENRKYF…DSRGVSAGIV (270 aa). Residues Asn37, Asn53, Asn105, Asn125, Asn191, Asn230, and Asn256 are each glycosylated (N-linked (GlcNAc...) asparagine). Residues 264–273 are compositionally biased toward pro residues; that stretch reads KPPMNVPRPP. Positions 264 to 283 are disordered; that stretch reads KPPMNVPRPPSVGHGANTTD. Asn280 and Asn284 each carry an N-linked (GlcNAc...) asparagine glycan. A helical transmembrane segment spans residues 295–315; it reads VVITVPAVVIVLILVVLGFFI. Residues 316 to 660 are Cytoplasmic-facing; that stretch reads CWRRKSLQRT…DPLSEGLESG (345 aa). Positions 353 to 632 constitute a Protein kinase domain; that stretch reads FSKSNKLGEG…IVSMLTSNTI (280 aa). Residues 359-367 and Lys381 contribute to the ATP site; that span reads LGEGRFGEV. Tyr426 carries the phosphotyrosine modification. Asp478 (proton acceptor) is an active-site residue. Position 482 is a phosphoserine (Ser482). Phosphothreonine is present on Thr518. A Phosphotyrosine modification is found at Tyr526.

The protein belongs to the protein kinase superfamily. Ser/Thr protein kinase family. CRK subfamily.

It localises to the membrane. It carries out the reaction L-seryl-[protein] + ATP = O-phospho-L-seryl-[protein] + ADP + H(+). It catalyses the reaction L-threonyl-[protein] + ATP = O-phospho-L-threonyl-[protein] + ADP + H(+). The polypeptide is Cysteine-rich receptor-like protein kinase 22 (CRK22) (Arabidopsis thaliana (Mouse-ear cress)).